A 185-amino-acid chain; its full sequence is Gastrokine-1 (185 aa).

A signal peptide spans 1–20 (MKFTIAFAGLLGVFLTPALA). One can recognise a BRICHOS domain in the interval 54 to 150 (NNGWNSWNAL…MCKGIPTYMA (97 aa)). Cysteine 81 and cysteine 142 are oxidised to a cystine.

The protein belongs to the gastrokine family. As to expression, highly expressed specifically in surface cells of the antrum mucosa from where it is secreted.

The protein localises to the secreted. The protein resides in the cytoplasmic granule. It is found in the golgi apparatus. Its function is as follows. Has mitogenic activity and may be involved in maintaining the integrity of the gastric mucosal epithelium. The protein is Gastrokine-1 (GKN1) of Sus scrofa (Pig).